A 196-amino-acid polypeptide reads, in one-letter code: MSARAPKELRLALPPCLLNRTFASHNASGGSNAGIRSSGAGGGTCITQVGQQLFQSFSSTLVLIVLVTLIFCLIVLSLSTFHIHKRRMKKRKMQRAQEEYERDHCSGSHGGGGLPRAGVQAPTHGKETRLERQPRDSAFCTPSNATSSSSSSPGLLCQGPCAPPPPPPVPSPHGAHAASSCLDTPGEGLLQTVVLS.

Residues 1 to 23 form the signal peptide; it reads MSARAPKELRLALPPCLLNRTFA. N-linked (GlcNAc...) asparagine glycans are attached at residues Asn-19 and Asn-26. Residues 24–60 are Extracellular-facing; sequence SHNASGGSNAGIRSSGAGGGTCITQVGQQLFQSFSST. The helical transmembrane segment at 61–81 threads the bilayer; it reads LVLIVLVTLIFCLIVLSLSTF. Over 82–196 the chain is Cytoplasmic; the sequence is HIHKRRMKKR…EGLLQTVVLS (115 aa). The interval 93–184 is disordered; it reads MQRAQEEYER…AHAASSCLDT (92 aa). Basic and acidic residues-rich tracts occupy residues 95 to 106 and 124 to 135; these read RAQEEYERDHCS and HGKETRLERQPR. The segment covering 161 to 171 has biased composition (pro residues); that stretch reads CAPPPPPPVPS. The segment covering 172–181 has biased composition (low complexity); the sequence is PHGAHAASSC.

Its subcellular location is the membrane. This is an uncharacterized protein from Rattus norvegicus (Rat).